Here is a 608-residue protein sequence, read N- to C-terminus: Threonine--tRNA ligase (608 aa).

Residues 1–145 (MKTLLIHAKH…TIKPGRRVRP (145 aa)) are editing domain. 2 catalytic regions span residues 192 to 489 (PKYL…PSLP) and 193 to 489 (KYLE…PSLP). Zn(2+) is bound by residues Cys-286, His-337, and His-458.

Belongs to the class-II aminoacyl-tRNA synthetase family. In terms of assembly, homodimer. It depends on Zn(2+) as a cofactor.

The protein localises to the cytoplasm. The catalysed reaction is tRNA(Thr) + L-threonine + ATP = L-threonyl-tRNA(Thr) + AMP + diphosphate + H(+). Catalyzes the attachment of threonine to tRNA(Thr) in a two-step reaction: L-threonine is first activated by ATP to form Thr-AMP and then transferred to the acceptor end of tRNA(Thr). Also edits incorrectly charged L-seryl-tRNA(Thr). The sequence is that of Threonine--tRNA ligase from Thermofilum pendens (strain DSM 2475 / Hrk 5).